Consider the following 566-residue polypeptide: Putative ABC transporter ATP-binding protein BCE_2668 (566 aa).

ABC transporter domains lie at 5 to 246 (ISFE…GLRE) and 300 to 533 (LKVE…ANLK). ATP is bound by residues 39–46 (GRSGSGKS) and 333–340 (GHNGAGKS).

It belongs to the ABC transporter superfamily.

The protein resides in the cell membrane. Functionally, probably part of an ABC transporter complex. Responsible for energy coupling to the transport system. The sequence is that of Putative ABC transporter ATP-binding protein BCE_2668 from Bacillus cereus (strain ATCC 10987 / NRS 248).